Reading from the N-terminus, the 274-residue chain is Large ribosomal subunit protein uL2 (274 aa).

Residues 223 to 258 (VAMNPVDHPHGGGEGRTSGGRHPVTPWGIPTKGYKT) form a disordered region.

Belongs to the universal ribosomal protein uL2 family. In terms of assembly, part of the 50S ribosomal subunit. Forms a bridge to the 30S subunit in the 70S ribosome.

In terms of biological role, one of the primary rRNA binding proteins. Required for association of the 30S and 50S subunits to form the 70S ribosome, for tRNA binding and peptide bond formation. It has been suggested to have peptidyltransferase activity; this is somewhat controversial. Makes several contacts with the 16S rRNA in the 70S ribosome. The chain is Large ribosomal subunit protein uL2 from Pelobacter propionicus (strain DSM 2379 / NBRC 103807 / OttBd1).